Consider the following 369-residue polypeptide: UPF0284 protein sll1500 (369 aa).

Belongs to the UPF0284 family.

This Synechocystis sp. (strain ATCC 27184 / PCC 6803 / Kazusa) protein is UPF0284 protein sll1500.